The primary structure comprises 364 residues: DNA replication and repair protein RecF (364 aa).

ATP is bound at residue 30–37 (GNNAQGKT).

It belongs to the RecF family.

The protein localises to the cytoplasm. The RecF protein is involved in DNA metabolism; it is required for DNA replication and normal SOS inducibility. RecF binds preferentially to single-stranded, linear DNA. It also seems to bind ATP. The chain is DNA replication and repair protein RecF from Clostridium botulinum (strain Okra / Type B1).